The chain runs to 325 residues: MFEHYSVLKEESIKGLAIKPDGIYVDCTTGGGGHSLEIASRLNENGQLFAFDQDKDALAAARDRLSTYADRIVFVQSNFRGLEEQLKKHGIEQVDGILFDLGVSSPQLDRGDRGFSYNHDALLDMRMDQSQHLSAYEVVNEWSYERLVSIFFSYGEEKFSKQIARKIEAYREQQDIKTTHQLVEIIKDAIPAPARRKGGHPAKRIFQALRIAVNDELEVFNNALHQAARLIAVNGRIAVITFHSLEDRICKQAFKKWSTDKPTPRHLPIVPESHQAPFKLVTRKPITADTSELDENRRSRSAKLRVIEKVSEWDHEFTYEEGWRK.

S-adenosyl-L-methionine is bound by residues 32-34, D52, F79, D100, and Q107; that span reads GGH.

The protein belongs to the methyltransferase superfamily. RsmH family.

Its subcellular location is the cytoplasm. The enzyme catalyses cytidine(1402) in 16S rRNA + S-adenosyl-L-methionine = N(4)-methylcytidine(1402) in 16S rRNA + S-adenosyl-L-homocysteine + H(+). Specifically methylates the N4 position of cytidine in position 1402 (C1402) of 16S rRNA. The sequence is that of Ribosomal RNA small subunit methyltransferase H from Oceanobacillus iheyensis (strain DSM 14371 / CIP 107618 / JCM 11309 / KCTC 3954 / HTE831).